The following is a 78-amino-acid chain: Probable [Fe-S]-dependent transcriptional repressor (78 aa).

Iron-sulfur cluster contacts are provided by C56, C61, C64, and C70.

It belongs to the FeoC family.

May function as a transcriptional regulator that controls feoABC expression. The sequence is that of Probable [Fe-S]-dependent transcriptional repressor from Escherichia coli O127:H6 (strain E2348/69 / EPEC).